We begin with the raw amino-acid sequence, 68 residues long: Peptide Hp1412 (68 aa).

The signal sequence occupies residues 1-23 (MKTHFAIFLITLFLFQMFSQSDA). Cysteine 36 bears the Cysteine amide mark. Residues 40–68 (GLSDLYDLDEMFDGEISQADIDFLKELMR) constitute a propeptide that is removed on maturation.

It belongs to the non-disulfide-bridged peptide (NDBP) superfamily. Short antimicrobial peptide (group 4) family. In terms of tissue distribution, expressed by the venom gland.

It is found in the secreted. Its subcellular location is the target cell membrane. Its function is as follows. Amphipathic peptide with antimicrobial activity. This chain is Peptide Hp1412, found in Heterometrus petersii (Asian forest scorpion).